The sequence spans 90 residues: Protein P18 (90 aa).

The next 3 helical transmembrane spans lie at 1 to 21 (MPFG…RDTL), 37 to 57 (GFGY…IKPI), and 60 to 80 (PVNA…RGAI).

The protein localises to the virion membrane. Functionally, component of the phage injection machinery. Required for DNA injection in the membrane transformation event. Involved in the formation of the membrane tail tube to connect the virus interior with the host cytosol. Essential for viral infectivity. The sequence is that of Protein P18 (XVIII) from Acinetobacter calcoaceticus (Arthrobacter siderocapsulatus).